Reading from the N-terminus, the 462-residue chain is Argininosuccinate lyase (462 aa).

It belongs to the lyase 1 family. Argininosuccinate lyase subfamily.

Its subcellular location is the cytoplasm. The catalysed reaction is 2-(N(omega)-L-arginino)succinate = fumarate + L-arginine. It functions in the pathway amino-acid biosynthesis; L-arginine biosynthesis; L-arginine from L-ornithine and carbamoyl phosphate: step 3/3. In Pelagibacter ubique (strain HTCC1062), this protein is Argininosuccinate lyase.